The primary structure comprises 141 residues: Calcitonin (141 aa).

An N-terminal signal peptide occupies residues 1–25; it reads MGFQKFSPFLALSILVLLQAGSLHA. Positions 26 to 82 are excised as a propeptide; that stretch reads APFRSALESSPADPATLSEDEARLLLAALVQDYVQMKASELEQEQEREGSSLDSPRS. Ser43 is subject to Phosphoserine. Disordered stretches follow at residues 64 to 85 and 111 to 141; these read SELEQEQEREGSSLDSPRSKRC and IGVGAPGKKRDMSSDLERDHRPHVSMPQNAN. A disulfide bridge connects residues Cys85 and Cys91. Pro116 is modified (proline amide). A compositionally biased stretch (basic and acidic residues) spans 118 to 132; that stretch reads KKRDMSSDLERDHRP.

Belongs to the calcitonin family.

It is found in the secreted. In terms of biological role, calcitonin is a peptide hormone that causes a rapid but short-lived drop in the level of calcium and phosphate in blood by promoting the incorporation of those ions in the bones. Calcitonin function is mediated by the calcitonin receptor/CALCR and the CALCR-RAMP2 (AMYR2) receptor complex. Its function is as follows. Katacalcin is a potent plasma calcium-lowering peptide. The protein is Calcitonin of Homo sapiens (Human).